Reading from the N-terminus, the 327-residue chain is Zinc transport protein ZntB (327 aa).

Topologically, residues Met-1–Met-273 are cytoplasmic. Residues Ala-274 to Ile-294 form a helical membrane-spanning segment. The Periplasmic portion of the chain corresponds to Pro-295–His-300. The chain crosses the membrane as a helical span at residues Leu-301–Leu-321. Residues His-322–Leu-327 are Cytoplasmic-facing.

Belongs to the CorA metal ion transporter (MIT) (TC 1.A.35) family.

It localises to the cell inner membrane. It carries out the reaction Zn(2+)(out) + H(+)(out) = Zn(2+)(in) + H(+)(in). Zinc transporter. Acts as a Zn(2+):proton symporter, which likely mediates zinc ion uptake. The sequence is that of Zinc transport protein ZntB from Klebsiella pneumoniae subsp. pneumoniae (strain ATCC 700721 / MGH 78578).